The chain runs to 166 residues: Probable chemoreceptor glutamine deamidase CheD (166 aa).

This sequence belongs to the CheD family.

It catalyses the reaction L-glutaminyl-[protein] + H2O = L-glutamyl-[protein] + NH4(+). Functionally, probably deamidates glutamine residues to glutamate on methyl-accepting chemotaxis receptors (MCPs), playing an important role in chemotaxis. The protein is Probable chemoreceptor glutamine deamidase CheD of Desulforamulus reducens (strain ATCC BAA-1160 / DSM 100696 / MI-1) (Desulfotomaculum reducens).